The chain runs to 403 residues: MAEPRQEFDVMEDHAQGDYTLQDHEGDMEPGLKESPLQTPADDGSEEPGSETSDAKSTPTAEAEEAGIGDTSNLEDQAAGHVTQARMVSKGKDGTGPDDKKAKGADGKPGTKIATPRGAAPPGQKGQANATRIPAKTTPTPKTSPGTGESGKSGDRSGYSSPGSPGTPGSRSRTPSLPTPPTREPKKVAVVRTPPKSPSAAKSRLQAAPGPMPDLKNVKSKIGSTENLKHQPGGGKVQIINKKLDLSNVQSKCGSKDNIKHVPGGGSVQIVYKPVDLSKVTSKCGSLGNIHHKPGGGQVEVKSEKLDFKDRVQSKIGSLDNITHVPGGGNKKIETHKLTFRENAKAKTDHGAEIVYKSPVVSGDTSPRHLSNVSSTGSIDMVDSPQLATLADEVSASLAKQGL.

The segment covering 1-32 (MAEPRQEFDVMEDHAQGDYTLQDHEGDMEPGL) has biased composition (basic and acidic residues). The disordered stretch occupies residues 1 to 219 (MAEPRQEFDV…GPMPDLKNVK (219 aa)). A2 is subject to N-acetylalanine. Y19 bears the Phosphotyrosine mark. Residue K33 forms a Glycyl lysine isopeptide (Lys-Gly) (interchain with G-Cter in ubiquitin) linkage. A phosphoserine mark is found at S35 and S50. A compositionally biased stretch (polar residues) spans 50 to 60 (SETSDAKSTPT). 3 positions are modified to phosphothreonine: T58, T60, and T71. The segment covering 90 to 106 (KGKDGTGPDDKKAKGAD) has biased composition (basic and acidic residues). The residue at position 115 (T115) is a Phosphothreonine. Omega-N-methylarginine is present on R117. The residue at position 125 (K125) is an N6,N6-dimethyllysine; alternate. Position 125 is an N6-acetyllysine; alternate (K125). Phosphothreonine occurs at positions 131, 137, 138, and 143. A compositionally biased stretch (low complexity) spans 136 to 147 (KTTPTPKTSPGT). S153 and S157 each carry phosphoserine. Residues 156-176 (RSGYSSPGSPGTPGSRSRTPS) show a composition bias toward low complexity. At Y159 the chain carries Phosphotyrosine. S160, S161, and S164 each carry phosphoserine. T167 and T174 each carry phosphothreonine. Position 176 is a phosphoserine (S176). T179 is modified (phosphothreonine). K187 carries the post-translational modification N6-acetyllysine. The residue at position 193 (T193) is a Phosphothreonine. Residues S197 and S199 each carry the phosphoserine modification. Tau/MAP repeat units follow at residues 206 to 236 (QAAPGPMPDLKNVKSKIGSTENLKHQPGGGK), 237 to 267 (VQIINKKLDLSNVQSKCGSKDNIKHVPGGGS), 268 to 298 (VQIVYKPVDLSKVTSKCGSLGNIHHKPGGGQ), and 299 to 330 (VEVKSEKLDFKDRVQSKIGSLDNITHVPGGGN). A Glycyl lysine isopeptide (Lys-Gly) (interchain with G-Cter in ubiquitin) cross-link involves residue K216. The residue at position 221 (K221) is an N6-acetyllysine; alternate. An N6-methyllysine; alternate modification is found at K221. K221 participates in a covalent cross-link: Glycyl lysine isopeptide (Lys-Gly) (interchain with G-Cter in ubiquitin); alternate. S224 bears the Phosphoserine mark. Residue K229 forms a Glycyl lysine isopeptide (Lys-Gly) (interchain with G-Cter in ubiquitin) linkage. K243 bears the N6-acetyllysine; alternate mark. K243 participates in a covalent cross-link: Glycyl lysine isopeptide (Lys-Gly) (interchain with G-Cter in ubiquitin); alternate. 2 positions are modified to phosphoserine: S247 and S251. K252 bears the N6-acetyllysine mark. C253 and C284 form a disulfide bridge. At S255 the chain carries Phosphoserine. An N6-acetyllysine; alternate modification is found at K260. Residue K260 forms a Glycyl lysine isopeptide (Lys-Gly) (interchain with G-Cter in ubiquitin); alternate linkage. S267 bears the Phosphoserine mark. K273 bears the N6,N6-dimethyllysine; alternate mark. N6-acetyllysine; alternate is present on residues K273, K279, and K283. Glycyl lysine isopeptide (Lys-Gly) (interchain with G-Cter in ubiquitin); alternate cross-links involve residues K273, K279, and K283. S286 is subject to Phosphoserine. N6-acetyllysine; alternate occurs at positions 293, 305, and 309. Glycyl lysine isopeptide (Lys-Gly) (interchain with G-Cter in ubiquitin); alternate cross-links involve residues K293, K305, and K309. R311 is subject to Omega-N-methylarginine. S314 carries the post-translational modification Phosphoserine. A Glycyl lysine isopeptide (Lys-Gly) (interchain with G-Cter in ubiquitin) cross-link involves residue K315. Phosphoserine is present on S318. N6-acetyllysine; alternate is present on K331. Residue K331 forms a Glycyl lysine isopeptide (Lys-Gly) (interchain with G-Cter in ubiquitin); alternate linkage. Residue K337 forms a Glycyl lysine isopeptide (Lys-Gly) (interchain with G-Cter in ubiquitin) linkage. K347 bears the N6-acetyllysine; alternate mark. A Glycyl lysine isopeptide (Lys-Gly) (interchain with G-Cter in ubiquitin); alternate cross-link involves residue K347. Y356 is modified (phosphotyrosine). A phosphoserine mark is found at S358 and S362. Residues 360–379 (VVSGDTSPRHLSNVSSTGSI) are disordered. The segment covering 363 to 378 (GDTSPRHLSNVSSTGS) has biased composition (polar residues). Residue T365 is modified to Phosphothreonine. Phosphoserine occurs at positions 366, 371, 378, and 384. Phosphothreonine is present on T389.

As to quaternary structure, interacts with MARK1, MARK2, MARK3 and MARK4. Interacts with SQSTM1 when polyubiquitinated. Interacts with PSMC2 through SQSTM1. Interacts with FKBP4. Binds to CSNK1D. Interacts with SGK1. Interacts with PIN1. Interacts with LRRK2. Interacts with LRP1, leading to endocytosis; this interaction is reduced in the presence of LRPAP1/RAP. Polyubiquitinated. Requires functional TRAF6 and may provoke SQSTM1-dependent degradation by the proteasome. Post-translationally, phosphorylation at various serine and threonine residues in S-P or T-P motifs by proline-directed protein kinases (PDPK1, CDK1, CDK5, GSK3, MAPK) (a few sites per protein in interphase, more in mitosis), and at serine residues in K-X-G-S motifs by MAP/microtubule affinity-regulating kinase (MARK1, MARK2, MARK3, MARK4), causing detachment from microtubules, and their disassembly. Phosphorylation at Ser-224 by BRSK1 and BRSK2 in neurons affects ability to bind microtubules and plays a role in neuron polarization. Phosphorylated by PHK. Dephosphorylation at several serine and threonine residues by the serine/threonine phosphatase PPP5C. In terms of tissue distribution, expressed in neurons.

The protein resides in the cytoplasm. Its subcellular location is the cytosol. The protein localises to the cell membrane. It is found in the cytoskeleton. It localises to the cell projection. The protein resides in the axon. Its subcellular location is the dendrite. Functionally, promotes microtubule assembly and stability, and might be involved in the establishment and maintenance of neuronal polarity. The C-terminus binds axonal microtubules while the N-terminus binds neural plasma membrane components, suggesting that tau functions as a linker protein between both. Axonal polarity is predetermined by tau localization (in the neuronal cell) in the domain of the cell body defined by the centrosome. The short isoforms allow plasticity of the cytoskeleton whereas the longer isoforms may preferentially play a role in its stabilization. The protein is Microtubule-associated protein tau (MAPT) of Capra hircus (Goat).